The chain runs to 256 residues: ATG8-interacting protein 1 (256 aa).

Positions 14–17 (WEVV) match the AIM (Atg8-family-interacting motif) motif. Residues 181 to 200 (ANAIWSLFFAAAVTGLVVLG) traverse the membrane as a helical segment. The short motif at 208–211 (WQVL) is the AIM (Atg8-family-interacting motif) element.

As to quaternary structure, interacts with ATG8F. Interacts with ATG8H. Interacts with APE1 and PSBS/NPQ4.

It is found in the endoplasmic reticulum membrane. Its subcellular location is the membrane. The protein localises to the plastid. It localises to the chloroplast membrane. In terms of biological role, involved in a special stress-induced plastid-to-vacuole protein trafficking pathway. Interacts with ATG8F in plastid bodies to subsequently enable their delivery to the vacuole by an autophagic pathway. Interacts with the plastid proteins APE1 and PSBS/NPQ4 and may recruit them as cargo into plastid bodies that may be recognized by the autophagy machinery for degradation in the vacuole. Involved in the alleviation of damage caused by salt stress during plant development, probably through its involvement in plastid-to-vacuole and ER-to-vacuole trafficking. Plays a role in seed germination in response to exogenous abscisic acid (ABA) treatment. This is ATG8-interacting protein 1 from Arabidopsis thaliana (Mouse-ear cress).